A 612-amino-acid polypeptide reads, in one-letter code: Zinc metalloproteinase-disintegrin-like 2d (612 aa).

Positions 1 to 20 are cleaved as a signal peptide; it reads MIQVLLVTICLAVFPYQGSS. Positions 21–189 are excised as a propeptide; it reads IILGSGNVND…KKASQLNLTP (169 aa). Residues 199 to 395 form the Peptidase M12B domain; that stretch reads KYIELVIVAD…NRPPCILNKP (197 aa). E202 is a binding site for Ca(2+). N-linked (GlcNAc...) asparagine glycosylation occurs at N218. D286 contacts Ca(2+). 3 cysteine pairs are disulfide-bonded: C310-C390, C350-C374, and C352-C357. Residue H335 coordinates Zn(2+). The active site involves E336. H339 and H345 together coordinate Zn(2+). C390, N393, V405, N408, F410, E412, E415, and D418 together coordinate Ca(2+). Positions 403 to 489 constitute a Disintegrin domain; that stretch reads PPVCGNYFVE…DCPTDNFQRN (87 aa). 14 disulfides stabilise this stretch: C406–C435, C417–C430, C419–C425, C429–C452, C443–C449, C448–C474, C461–C481, C468–C500, C493–C505, C512–C562, C527–C573, C540–C550, C557–C599, and C593–C605. A D/ECD-tripeptide motif is present at residues 467–469; the sequence is ECD.

The protein belongs to the venom metalloproteinase (M12B) family. P-III subfamily. Zn(2+) serves as cofactor. In terms of tissue distribution, expressed by the venom gland.

It is found in the secreted. In terms of biological role, snake venom metalloproteinase that impairs hemostasis in the envenomed animal. This Crotalus adamanteus (Eastern diamondback rattlesnake) protein is Zinc metalloproteinase-disintegrin-like 2d.